A 247-amino-acid polypeptide reads, in one-letter code: GTP cyclohydrolase 1 type 2 homolog (247 aa).

Positions 63, 64, 101, 215, and 219 each coordinate a divalent metal cation.

Belongs to the GTP cyclohydrolase I type 2/NIF3 family. Homohexamer.

The polypeptide is GTP cyclohydrolase 1 type 2 homolog (Buchnera aphidicola subsp. Schizaphis graminum (strain Sg)).